The chain runs to 96 residues: uncharacterized protein (96 aa).

3 helical membrane passes run 2–22 (FIFN…ICYF), 38–58 (AGLK…TVML), and 68–88 (LTLA…QLIV).

Its subcellular location is the membrane. This is an uncharacterized protein from Schizosaccharomyces pombe (strain 972 / ATCC 24843) (Fission yeast).